The chain runs to 75 residues: UPF0352 protein VF_1649 (75 aa).

This sequence belongs to the UPF0352 family.

The protein is UPF0352 protein VF_1649 of Aliivibrio fischeri (strain ATCC 700601 / ES114) (Vibrio fischeri).